Consider the following 377-residue polypeptide: Glutamate 5-kinase (377 aa).

Lys-20 serves as a coordination point for ATP. Residues Ser-60, Asp-147, and Asn-159 each contribute to the substrate site. 179-180 (TD) serves as a coordination point for ATP. A PUA domain is found at 285–363 (AGRLVIDAGA…DKVHQVLGEA (79 aa)).

It belongs to the glutamate 5-kinase family.

The protein resides in the cytoplasm. The catalysed reaction is L-glutamate + ATP = L-glutamyl 5-phosphate + ADP. It functions in the pathway amino-acid biosynthesis; L-proline biosynthesis; L-glutamate 5-semialdehyde from L-glutamate: step 1/2. Its function is as follows. Catalyzes the transfer of a phosphate group to glutamate to form L-glutamate 5-phosphate. In Acinetobacter baylyi (strain ATCC 33305 / BD413 / ADP1), this protein is Glutamate 5-kinase.